The sequence spans 418 residues: uncharacterized protein (418 aa).

This is an uncharacterized protein from Invertebrate iridescent virus 6 (IIV-6).